We begin with the raw amino-acid sequence, 359 residues long: tRNA-specific 2-thiouridylase MnmA (359 aa).

Residues G9–S16 and M35 contribute to the ATP site. Residue C104 is the Nucleophile of the active site. C104 and C200 are disulfide-bonded. G128 contributes to the ATP binding site. The segment at K150–Q152 is interaction with tRNA. C200 serves as the catalytic Cysteine persulfide intermediate. Positions R306–Y307 are interaction with tRNA.

It belongs to the MnmA/TRMU family.

Its subcellular location is the cytoplasm. It carries out the reaction S-sulfanyl-L-cysteinyl-[protein] + uridine(34) in tRNA + AH2 + ATP = 2-thiouridine(34) in tRNA + L-cysteinyl-[protein] + A + AMP + diphosphate + H(+). Functionally, catalyzes the 2-thiolation of uridine at the wobble position (U34) of tRNA, leading to the formation of s(2)U34. This Clostridium perfringens (strain ATCC 13124 / DSM 756 / JCM 1290 / NCIMB 6125 / NCTC 8237 / Type A) protein is tRNA-specific 2-thiouridylase MnmA.